A 698-amino-acid polypeptide reads, in one-letter code: Ion-translocating oxidoreductase complex subunit C (698 aa).

2 consecutive 4Fe-4S ferredoxin-type domains span residues 366 to 397 and 407 to 436; these read TEMG…QQLY and KARN…VQYY. [4Fe-4S] cluster-binding residues include Cys377, Cys380, Cys383, Cys387, Cys416, Cys419, Cys422, and Cys426.

This sequence belongs to the 4Fe4S bacterial-type ferredoxin family. RnfC subfamily. In terms of assembly, the complex is composed of six subunits: RnfA, RnfB, RnfC, RnfD, RnfE and RnfG. It depends on [4Fe-4S] cluster as a cofactor.

The protein localises to the cell inner membrane. In terms of biological role, part of a membrane-bound complex that couples electron transfer with translocation of ions across the membrane. This Yersinia pseudotuberculosis serotype O:3 (strain YPIII) protein is Ion-translocating oxidoreductase complex subunit C.